The primary structure comprises 123 residues: Large ribosomal subunit protein bL19 (123 aa).

This sequence belongs to the bacterial ribosomal protein bL19 family.

This protein is located at the 30S-50S ribosomal subunit interface and may play a role in the structure and function of the aminoacyl-tRNA binding site. The polypeptide is Large ribosomal subunit protein bL19 (Laribacter hongkongensis (strain HLHK9)).